Here is a 311-residue protein sequence, read N- to C-terminus: 4-diphosphocytidyl-2-C-methyl-D-erythritol kinase (311 aa).

The active site involves Lys16. ATP is bound at residue 101-111 (PVAGGMAGGSA). Asp143 is a catalytic residue.

It belongs to the GHMP kinase family. IspE subfamily.

It catalyses the reaction 4-CDP-2-C-methyl-D-erythritol + ATP = 4-CDP-2-C-methyl-D-erythritol 2-phosphate + ADP + H(+). It functions in the pathway isoprenoid biosynthesis; isopentenyl diphosphate biosynthesis via DXP pathway; isopentenyl diphosphate from 1-deoxy-D-xylulose 5-phosphate: step 3/6. Functionally, catalyzes the phosphorylation of the position 2 hydroxy group of 4-diphosphocytidyl-2C-methyl-D-erythritol. The chain is 4-diphosphocytidyl-2-C-methyl-D-erythritol kinase from Rhodococcus jostii (strain RHA1).